The following is a 534-amino-acid chain: Cytochrome P450 monooxygenase AN1598 (534 aa).

Residue Asn3 is glycosylated (N-linked (GlcNAc...) asparagine). Residues 25–45 (LYLEILGVLSVVYLLQTLVAY) form a helical membrane-spanning segment. A glycan (N-linked (GlcNAc...) asparagine) is linked at Asn95. Heme is bound at residue Cys464. Asn498 carries an N-linked (GlcNAc...) asparagine glycan.

The protein belongs to the cytochrome P450 family. It depends on heme as a cofactor.

It is found in the membrane. It participates in secondary metabolite biosynthesis; terpenoid biosynthesis. Functionally, bifunctional terpene synthase; part of the gene cluster that mediates the biosynthesis of the diterpene ent-pimara-8(14),15-diene (PD). Within the cluster, the HMG-CoA reductase AN1593 functions in the mevalonate pathway, which produces isoprenoid precursors. The geranylgeranyl pyrophosphate (GGPP) synthase AN1592 is needed in the formation of GGPP, the precursor for diterpenes. Lastly, the pimaradiene synthase pbcA performs the 2 cyclization steps that convert GGPP to ent-pimara-8(14),15-diene. The putative roles of the remaining cluster enzymes in ent-pimara-8(14),15-diene biosynthesis is unclear. The cytochrome P450 monooxygenase AN1598, the glutathione S-transferase AN1595, the oxidoreductases AN1596 and AN1597 probably function as decorative enzymes. It is possible that in biological conditions the compound is oxidized to ent-pimara-8(14),15-dien-19-oic acid, which is a bioactive diterpene compound predominant in many plant extracts. The chain is Cytochrome P450 monooxygenase AN1598 from Emericella nidulans (strain FGSC A4 / ATCC 38163 / CBS 112.46 / NRRL 194 / M139) (Aspergillus nidulans).